The primary structure comprises 103 residues: Integration host factor subunit beta (103 aa).

It belongs to the bacterial histone-like protein family. Heterodimer of an alpha and a beta chain.

Functionally, this protein is one of the two subunits of integration host factor, a specific DNA-binding protein that functions in genetic recombination as well as in transcriptional and translational control. This is Integration host factor subunit beta from Bradyrhizobium sp. (strain BTAi1 / ATCC BAA-1182).